The sequence spans 281 residues: MNTPEHSQLGKASAYADQYDASLLFPIPRADKRAEIGIDGNAPFFGADLWTAFELSWLNLRGKPQVAIAHITVPCETPHIVESKSFKLYLNSFNNTRFGDASEVQARLRADISEAVWRGAPHPATVGVKLIAPELFDQEPVHELDGLSLDRLDVECTRYQPAPDLLTATFNEAPVTETLTSNLLKSNCLVTGQPDWGSVQISYSGPQINQEGLLQYLVSFRNHNEFHEQCVERIFMDLWTRCKPIKLKVYARYTRRGGLDINPWRTSHPQTMPKNVRTARQ.

Residue 81-83 participates in substrate binding; sequence VES. 83 to 84 provides a ligand contact to NADPH; it reads SK. The Thioimide intermediate role is filled by cysteine 188. Aspartate 195 functions as the Proton donor in the catalytic mechanism. A substrate-binding site is contributed by 227–228; that stretch reads HE. Position 256-257 (256-257) interacts with NADPH; it reads RG.

Belongs to the GTP cyclohydrolase I family. QueF type 2 subfamily. As to quaternary structure, homodimer.

Its subcellular location is the cytoplasm. It catalyses the reaction 7-aminomethyl-7-carbaguanine + 2 NADP(+) = 7-cyano-7-deazaguanine + 2 NADPH + 3 H(+). It participates in tRNA modification; tRNA-queuosine biosynthesis. In terms of biological role, catalyzes the NADPH-dependent reduction of 7-cyano-7-deazaguanine (preQ0) to 7-aminomethyl-7-deazaguanine (preQ1). The sequence is that of NADPH-dependent 7-cyano-7-deazaguanine reductase from Acidovorax ebreus (strain TPSY) (Diaphorobacter sp. (strain TPSY)).